The following is a 187-amino-acid chain: MTTTEKALPRLKQRYREEIREALQQEFNYANVMQIPGVVKVVVNMGVGDAARDAKLINGAINDLALITGQKPEVRRARKSIAQFKLREGMPIGARVTLRGDRMWEFLDRLISIALPRIRDFRGLSPKQFDGTGNYTFGLNEQSMFHEIDVDSIDRPRGMDITVVTTATNDAEGRALLRALGFPFKEN.

Belongs to the universal ribosomal protein uL5 family. In terms of assembly, part of the 50S ribosomal subunit; part of the 5S rRNA/L5/L18/L25 subcomplex. Contacts the 5S rRNA and the P site tRNA. Forms a bridge to the 30S subunit in the 70S ribosome.

Its function is as follows. This is one of the proteins that bind and probably mediate the attachment of the 5S RNA into the large ribosomal subunit, where it forms part of the central protuberance. In the 70S ribosome it contacts protein S13 of the 30S subunit (bridge B1b), connecting the 2 subunits; this bridge is implicated in subunit movement. Contacts the P site tRNA; the 5S rRNA and some of its associated proteins might help stabilize positioning of ribosome-bound tRNAs. The protein is Large ribosomal subunit protein uL5 of Mycolicibacterium smegmatis (strain ATCC 700084 / mc(2)155) (Mycobacterium smegmatis).